The following is a 181-amino-acid chain: Shikimate kinase 2 (181 aa).

12-17 contacts ATP; the sequence is GCGKTT. Positions 16 and 32 each coordinate Mg(2+). Positions 34, 58, and 79 each coordinate substrate. The tract at residues 112-126 is LID domain; that stretch reads EAEPEAELRPTLTGK. Arg120 is a binding site for ATP. Substrate is bound at residue Arg139.

This sequence belongs to the shikimate kinase family. AroL subfamily. Monomer. Mg(2+) is required as a cofactor.

The protein resides in the cytoplasm. It catalyses the reaction shikimate + ATP = 3-phosphoshikimate + ADP + H(+). It participates in metabolic intermediate biosynthesis; chorismate biosynthesis; chorismate from D-erythrose 4-phosphate and phosphoenolpyruvate: step 5/7. In terms of biological role, catalyzes the specific phosphorylation of the 3-hydroxyl group of shikimic acid using ATP as a cosubstrate. The sequence is that of Shikimate kinase 2 from Salmonella schwarzengrund (strain CVM19633).